The sequence spans 147 residues: D-aminoacyl-tRNA deacylase (147 aa).

A Gly-cisPro motif, important for rejection of L-amino acids motif is present at residues 136-137 (GP).

The protein belongs to the DTD family. Homodimer.

The protein resides in the cytoplasm. The catalysed reaction is glycyl-tRNA(Ala) + H2O = tRNA(Ala) + glycine + H(+). It catalyses the reaction a D-aminoacyl-tRNA + H2O = a tRNA + a D-alpha-amino acid + H(+). An aminoacyl-tRNA editing enzyme that deacylates mischarged D-aminoacyl-tRNAs. Also deacylates mischarged glycyl-tRNA(Ala), protecting cells against glycine mischarging by AlaRS. Acts via tRNA-based rather than protein-based catalysis; rejects L-amino acids rather than detecting D-amino acids in the active site. By recycling D-aminoacyl-tRNA to D-amino acids and free tRNA molecules, this enzyme counteracts the toxicity associated with the formation of D-aminoacyl-tRNA entities in vivo and helps enforce protein L-homochirality. This chain is D-aminoacyl-tRNA deacylase, found in Streptococcus suis (strain 98HAH33).